The primary structure comprises 427 residues: Homogentisate 1,2-dioxygenase (427 aa).

Histidine 285 (proton acceptor) is an active-site residue. 2 residues coordinate Fe cation: histidine 328 and glutamate 334. Homogentisate is bound by residues tyrosine 343 and histidine 364. Fe cation is bound at residue histidine 364.

It belongs to the homogentisate dioxygenase family. In terms of assembly, hexamer; dimer of trimers. Fe cation is required as a cofactor.

The catalysed reaction is homogentisate + O2 = 4-maleylacetoacetate + H(+). The protein operates within amino-acid degradation; L-phenylalanine degradation; acetoacetate and fumarate from L-phenylalanine: step 4/6. Involved in the catabolism of homogentisate (2,5-dihydroxyphenylacetate or 2,5-OH-PhAc), a central intermediate in the degradation of phenylalanine and tyrosine. Catalyzes the oxidative ring cleavage of the aromatic ring of homogentisate to yield maleylacetoacetate. The polypeptide is Homogentisate 1,2-dioxygenase (Caulobacter sp. (strain K31)).